A 708-amino-acid polypeptide reads, in one-letter code: tRNA(Met) cytidine acetyltransferase TmcA (708 aa).

Residues Gln-189, 215–224 (GRGKTSALGL), and Arg-357 contribute to the ATP site. The N-acetyltransferase domain maps to 398–574 (PECVEQPERL…YSLLMVRGEH (177 aa)). Residues 502–504 (IAV) and 509–515 (QRQGIGS) contribute to the acetyl-CoA site.

This sequence belongs to the RNA cytidine acetyltransferase family. TmcA subfamily.

Its subcellular location is the cytoplasm. It carries out the reaction cytidine(34) in elongator tRNA(Met) + acetyl-CoA + ATP + H2O = N(4)-acetylcytidine(34) in elongator tRNA(Met) + ADP + phosphate + CoA + H(+). Catalyzes the formation of N(4)-acetylcytidine (ac(4)C) at the wobble position of tRNA(Met), by using acetyl-CoA as an acetyl donor and ATP (or GTP). The protein is tRNA(Met) cytidine acetyltransferase TmcA of Vibrio cholerae serotype O1 (strain ATCC 39315 / El Tor Inaba N16961).